Here is a 599-residue protein sequence, read N- to C-terminus: Elongation factor 4 (599 aa).

The region spanning 5 to 187 is the tr-type G domain; it reads SHIRNFSIIA…ALVNGIPAPV (183 aa). Residues 17–22 and 134–137 contribute to the GTP site; these read DHGKST and NKMD.

This sequence belongs to the TRAFAC class translation factor GTPase superfamily. Classic translation factor GTPase family. LepA subfamily.

Its subcellular location is the cell inner membrane. The enzyme catalyses GTP + H2O = GDP + phosphate + H(+). Its function is as follows. Required for accurate and efficient protein synthesis under certain stress conditions. May act as a fidelity factor of the translation reaction, by catalyzing a one-codon backward translocation of tRNAs on improperly translocated ribosomes. Back-translocation proceeds from a post-translocation (POST) complex to a pre-translocation (PRE) complex, thus giving elongation factor G a second chance to translocate the tRNAs correctly. Binds to ribosomes in a GTP-dependent manner. The chain is Elongation factor 4 from Teredinibacter turnerae (strain ATCC 39867 / T7901).